The chain runs to 24 residues: Defensin D5 (24 aa).

Belongs to the DEFL family. Group IV subfamily. In terms of tissue distribution, distributed in the epidermal cell layer of leaves and in the subepidermal layer region of stems. Not in roots.

The protein localises to the secreted. It localises to the cell wall. Its function is as follows. Antimicrobial peptide. Active against Fusarium spp., Gram-positive and Gram-negative bacterial pathogens. The protein is Defensin D5 of Spinacia oleracea (Spinach).